The sequence spans 203 residues: Putative archaetidylserine decarboxylase proenzyme (203 aa).

The active-site Schiff-base intermediate with substrate; via pyruvic acid is S171. Pyruvic acid (Ser); by autocatalysis is present on S171.

Belongs to the phosphatidylserine decarboxylase family. PSD-A subfamily. Heterodimer of a large membrane-associated beta subunit and a small pyruvoyl-containing alpha subunit. The cofactor is pyruvate. In terms of processing, is synthesized initially as an inactive proenzyme. Formation of the active enzyme involves a self-maturation process in which the active site pyruvoyl group is generated from an internal serine residue via an autocatalytic post-translational modification. Two non-identical subunits are generated from the proenzyme in this reaction, and the pyruvate is formed at the N-terminus of the alpha chain, which is derived from the carboxyl end of the proenzyme. The post-translation cleavage follows an unusual pathway, termed non-hydrolytic serinolysis, in which the side chain hydroxyl group of the serine supplies its oxygen atom to form the C-terminus of the beta chain, while the remainder of the serine residue undergoes an oxidative deamination to produce ammonia and the pyruvoyl prosthetic group on the alpha chain.

The protein localises to the cell membrane. It carries out the reaction archaetidylserine + H(+) = archaetidylethanolamine + CO2. In terms of biological role, catalyzes the formation of archaetidylethanolamine (PtdEtn) from archaetidylserine (PtdSer). The sequence is that of Putative archaetidylserine decarboxylase proenzyme from Methanosarcina barkeri (strain Fusaro / DSM 804).